A 128-amino-acid polypeptide reads, in one-letter code: uncharacterized protein (128 aa).

Residues 1 to 126 (MHHIELYVSD…DRIKVELVAP (126 aa)) enclose the VOC domain.

This is an uncharacterized protein from Bacillus subtilis (strain 168).